The sequence spans 348 residues: Phenylalanine--tRNA ligase alpha subunit (348 aa).

Glu-259 provides a ligand contact to Mg(2+).

It belongs to the class-II aminoacyl-tRNA synthetase family. Phe-tRNA synthetase alpha subunit type 1 subfamily. In terms of assembly, tetramer of two alpha and two beta subunits. The cofactor is Mg(2+).

Its subcellular location is the cytoplasm. The enzyme catalyses tRNA(Phe) + L-phenylalanine + ATP = L-phenylalanyl-tRNA(Phe) + AMP + diphosphate + H(+). The sequence is that of Phenylalanine--tRNA ligase alpha subunit from Enterococcus faecalis (strain ATCC 700802 / V583).